A 399-amino-acid polypeptide reads, in one-letter code: A-type ATP synthase subunit C (399 aa).

This sequence belongs to the V-ATPase V0D/AC39 subunit family. In terms of assembly, the A-type ATPase is composed of subunits A(3), B(3), C, D, E(1 or 2), F, H(2), I and K(x).

Its subcellular location is the cell membrane. Functionally, component of the A-type ATP synthase that produces ATP from ADP in the presence of a proton gradient across the membrane. This is A-type ATP synthase subunit C from Methanocaldococcus jannaschii (strain ATCC 43067 / DSM 2661 / JAL-1 / JCM 10045 / NBRC 100440) (Methanococcus jannaschii).